Consider the following 740-residue polypeptide: Cell death abnormality protein 12 (740 aa).

Residues 348–494 form the ELMO domain; that stretch reads SEIQKVLDID…FVLEQLRHVL (147 aa). Residues 555 to 690 form a required for punctate localization, cell corpse engulfment and distal cell tip migration region; the sequence is INHLNYLKKG…ESLAYLVGNT (136 aa). Positions 724-727 match the SH3-binding motif; it reads PDVP.

As to quaternary structure, interacts with psr-1. Forms a ternary complex with ced-2 and ced-5.

It is found in the cytoplasm. In terms of biological role, involved in apoptosis and necrosis. Required for the cell corpse engulfment process. Has roles in the formation of actin halos and distal tip cell migration. Plays no role in amphid axon outgrowth. The chain is Cell death abnormality protein 12 from Caenorhabditis briggsae.